Reading from the N-terminus, the 292-residue chain is N-acetylneuraminate lyase (292 aa).

Positions 47 and 48 each coordinate aceneuramate. The Proton donor role is filled by Tyr-136. Lys-164 (schiff-base intermediate with substrate) is an active-site residue. Residues Thr-166, Gly-188, Asp-190, Glu-191, and Ser-207 each contribute to the aceneuramate site.

This sequence belongs to the DapA family. NanA subfamily. Homotetramer.

Its subcellular location is the cytoplasm. It carries out the reaction aceneuramate = aldehydo-N-acetyl-D-mannosamine + pyruvate. Its pathway is amino-sugar metabolism; N-acetylneuraminate degradation; D-fructose 6-phosphate from N-acetylneuraminate: step 1/5. Functionally, catalyzes the reversible aldol cleavage of N-acetylneuraminic acid (sialic acid; Neu5Ac) to form pyruvate and N-acetylmannosamine (ManNAc) via a Schiff base intermediate. This chain is N-acetylneuraminate lyase, found in Actinobacillus pleuropneumoniae serotype 3 (strain JL03).